The sequence spans 66 residues: Large ribosomal subunit protein bL33 (66 aa).

The protein belongs to the bacterial ribosomal protein bL33 family.

This chain is Large ribosomal subunit protein bL33, found in Synechococcus sp. (strain CC9902).